We begin with the raw amino-acid sequence, 431 residues long: Tol-Pal system protein TolB (431 aa).

Residues 1–26 form the signal peptide; that stretch reads MSLMTKLGFRALVASCLIAAGSAANA. Residues 411–431 form a disordered region; it reads PQILSVQGGSVREPSWGPFMQ.

It belongs to the TolB family. As to quaternary structure, the Tol-Pal system is composed of five core proteins: the inner membrane proteins TolA, TolQ and TolR, the periplasmic protein TolB and the outer membrane protein Pal. They form a network linking the inner and outer membranes and the peptidoglycan layer.

The protein localises to the periplasm. Functionally, part of the Tol-Pal system, which plays a role in outer membrane invagination during cell division and is important for maintaining outer membrane integrity. The polypeptide is Tol-Pal system protein TolB (Burkholderia multivorans (strain ATCC 17616 / 249)).